Reading from the N-terminus, the 482-residue chain is tRNA sulfurtransferase (482 aa).

The THUMP domain occupies 61-165 (LAIRDALTRI…DDRLLLIKGR (105 aa)). ATP-binding positions include 183–184 (LI), Lys265, Gly287, and Gln296. Cys344 and Cys456 are joined by a disulfide. The 79-residue stretch at 404 to 482 (FGPNDVILDI…GFENVKVYRP (79 aa)) folds into the Rhodanese domain. The Cysteine persulfide intermediate role is filled by Cys456.

It belongs to the ThiI family.

The protein resides in the cytoplasm. It carries out the reaction [ThiI sulfur-carrier protein]-S-sulfanyl-L-cysteine + a uridine in tRNA + 2 reduced [2Fe-2S]-[ferredoxin] + ATP + H(+) = [ThiI sulfur-carrier protein]-L-cysteine + a 4-thiouridine in tRNA + 2 oxidized [2Fe-2S]-[ferredoxin] + AMP + diphosphate. It catalyses the reaction [ThiS sulfur-carrier protein]-C-terminal Gly-Gly-AMP + S-sulfanyl-L-cysteinyl-[cysteine desulfurase] + AH2 = [ThiS sulfur-carrier protein]-C-terminal-Gly-aminoethanethioate + L-cysteinyl-[cysteine desulfurase] + A + AMP + 2 H(+). The protein operates within cofactor biosynthesis; thiamine diphosphate biosynthesis. In terms of biological role, catalyzes the ATP-dependent transfer of a sulfur to tRNA to produce 4-thiouridine in position 8 of tRNAs, which functions as a near-UV photosensor. Also catalyzes the transfer of sulfur to the sulfur carrier protein ThiS, forming ThiS-thiocarboxylate. This is a step in the synthesis of thiazole, in the thiamine biosynthesis pathway. The sulfur is donated as persulfide by IscS. The protein is tRNA sulfurtransferase of Salmonella enteritidis PT4 (strain P125109).